Here is a 477-residue protein sequence, read N- to C-terminus: Alkaline phosphatase (477 aa).

Asp-44 lines the Mg(2+) pocket. Asp-44 is a binding site for Zn(2+). Ser-94 acts as the Phosphoserine intermediate in catalysis. Asn-124 carries an N-linked (GlcNAc...) asparagine glycan. 2 residues coordinate Mg(2+): His-155 and Thr-157. An intrachain disulfide couples Cys-165 to Cys-185. Asn-214 carries N-linked (GlcNAc...) asparagine glycosylation. Residue Glu-315 coordinates Mg(2+). Zn(2+) contacts are provided by Asp-320, His-324, Asp-361, and His-362. N-linked (GlcNAc...) asparagine glycosylation is present at Asn-413. A Zn(2+)-binding site is contributed by His-437.

In terms of assembly, homodimer. Mg(2+) is required as a cofactor. Requires Zn(2+) as cofactor.

Its subcellular location is the cell membrane. The catalysed reaction is a phosphate monoester + H2O = an alcohol + phosphate. This is Alkaline phosphatase from Gadus morhua (Atlantic cod).